A 201-amino-acid polypeptide reads, in one-letter code: Large ribosomal subunit protein uL4 (201 aa).

The interval 39-72 (KRQGTSAQKSRSEVIGSGKKPWRQKGTGRARAGS) is disordered.

Belongs to the universal ribosomal protein uL4 family. In terms of assembly, part of the 50S ribosomal subunit.

Its function is as follows. One of the primary rRNA binding proteins, this protein initially binds near the 5'-end of the 23S rRNA. It is important during the early stages of 50S assembly. It makes multiple contacts with different domains of the 23S rRNA in the assembled 50S subunit and ribosome. In terms of biological role, forms part of the polypeptide exit tunnel. The protein is Large ribosomal subunit protein uL4 of Wigglesworthia glossinidia brevipalpis.